We begin with the raw amino-acid sequence, 114 residues long: Fluoride-specific ion channel FluC 1 (114 aa).

The next 3 helical transmembrane spans lie at 23-43 (ATLT…SYVF), 52-72 (LSTA…TLSV), and 84-104 (FLAM…SHLG). The Na(+) site is built by Gly-62 and Thr-65.

This sequence belongs to the fluoride channel Fluc/FEX (TC 1.A.43) family.

The protein resides in the cell membrane. The enzyme catalyses fluoride(in) = fluoride(out). Na(+) is not transported, but it plays an essential structural role and its presence is essential for fluoride channel function. Its function is as follows. Fluoride-specific ion channel. Important for reducing fluoride concentration in the cell, thus reducing its toxicity. In Desulfitobacterium hafniense (strain Y51), this protein is Fluoride-specific ion channel FluC 1.